We begin with the raw amino-acid sequence, 126 residues long: Protein LLP homolog (126 aa).

Residues 1-21 (MAKSLRSKWRRKMRAEKRKKV) are compositionally biased toward basic residues. Disordered stretches follow at residues 1-22 (MAKS…KKVA) and 53-126 (VPPE…RLAW). The segment covering 73 to 94 (DGGKMDLDTKRNKKTMLDEHGR) has biased composition (basic and acidic residues). Over residues 103–126 (QAKKLKAKRVGKNGKPKPKKRLAW) the composition is skewed to basic residues.

The protein belongs to the learning-associated protein family.

The protein resides in the nucleus. The protein localises to the nucleolus. It localises to the chromosome. In terms of biological role, regulates dendritic and spine growth and synaptic transmission. This Danio rerio (Zebrafish) protein is Protein LLP homolog (llph).